The primary structure comprises 394 residues: Phosphoglycerate kinase (394 aa).

Substrate is bound by residues 21–23 (DFN), R36, 59–62 (HLGR), R118, and R151. S183 carries the post-translational modification Phosphoserine. Residue K201 participates in ATP binding. T299 is modified (phosphothreonine). Residues E323 and 350–353 (GGDS) each bind ATP.

It belongs to the phosphoglycerate kinase family. Monomer.

The protein resides in the cytoplasm. It catalyses the reaction (2R)-3-phosphoglycerate + ATP = (2R)-3-phospho-glyceroyl phosphate + ADP. It functions in the pathway carbohydrate degradation; glycolysis; pyruvate from D-glyceraldehyde 3-phosphate: step 2/5. The chain is Phosphoglycerate kinase from Geobacillus sp. (strain WCH70).